The primary structure comprises 220 residues: tRNA (guanine-N(7)-)-methyltransferase (220 aa).

S-adenosyl-L-methionine is bound by residues Glu-44, Glu-69, Asn-96, and Asp-118. Asp-118 is a catalytic residue. Lys-122 contributes to the substrate binding site. The segment at 124-129 is interaction with RNA; it reads RHEKRR. Substrate contacts are provided by residues Asp-154 and 191 to 194; that span reads TEYE.

This sequence belongs to the class I-like SAM-binding methyltransferase superfamily. TrmB family.

The enzyme catalyses guanosine(46) in tRNA + S-adenosyl-L-methionine = N(7)-methylguanosine(46) in tRNA + S-adenosyl-L-homocysteine. Its pathway is tRNA modification; N(7)-methylguanine-tRNA biosynthesis. Catalyzes the formation of N(7)-methylguanine at position 46 (m7G46) in tRNA. This is tRNA (guanine-N(7)-)-methyltransferase from Geobacillus sp. (strain WCH70).